Here is an 803-residue protein sequence, read N- to C-terminus: H(+)/Cl(-) exchange transporter 7 (803 aa).

The disordered stretch occupies residues 1–46 (MANVSKKVSWSGRDRDDEEGAPLLRRTGQPDEETPLLNGAGPGARQ). At 1–124 (MANVSKKVSW…TAFRTVEIKR (124 aa)) the chain is on the cytoplasmic side. A Phosphoserine modification is found at Ser9. A run of 2 helical transmembrane segments spans residues 125–157 (WVICALIGILTGLVACFIDIVVENLAGLKYRVI) and 172–195 (FSLLLWATLNSAFVLVGSVIVAFI). The short motif at 201–205 (GSGIP) is the Selectivity filter part_1 element. Ser202 provides a ligand contact to chloride. The helical intramembrane region spans 204–211 (IPQIKCFL). Helical transmembrane passes span 221-239 (RLKTLVIKVSGVILSVVGG) and 245-262 (EGPMIHSGSVIAAGISQG). Positions 243-247 (GKEGP) match the Selectivity filter part_2 motif. Intramembrane regions (helical) lie at residues 286-298 (FVSAGAAAGVSAA) and 302-310 (PVGGVLFSL). 5 helical membrane-spanning segments follow: residues 320-339 (FLTWRIFFASMISTFTLNFV), 373-403 (IPVFIAMGVVGGILGAVFNALNYWLTMFRIR), 408-430 (PCLQVIEAMLVAAVTATVAFVLI), 485-505 (PMTLGLFTLVYFFLACWTYGL), and 510-533 (GVFIPSLLIGAAWGRLFGISLSYL). Positions 510 to 514 (GVFIP) match the Selectivity filter part_3 motif. Phe512 provides a ligand contact to chloride. Positions 543 to 557 (GKYALMGAAAQLGGI) form an intramembrane region, helical. The note=Loop between two helices intramembrane region spans 558 to 560 (VRM). Residues 561 to 572 (TLSLTVIMMEAT) constitute an intramembrane region (helical). An intramembrane region (note=Loop between two helices) is located at residues 573-576 (SNVT). A helical transmembrane segment spans residues 577-595 (YGFPIMLVLMTAKIVGDVF). Residues 596–803 (IEGLYDMHIQ…GLEELSLAQT (208 aa)) lie on the Cytoplasmic side of the membrane. A chloride-binding site is contributed by Tyr600. CBS domains are found at residues 629 to 693 (MSTP…VFVE) and 739 to 797 (MNPS…GLEE). ATP-binding positions include 656 to 658 (HNG) and 781 to 784 (TRKD). At Ser799 the chain carries Phosphoserine.

It belongs to the chloride channel (TC 2.A.49) family. ClC-7/CLCN7 subfamily. As to quaternary structure, chloride channel 7 are heteromers of alpha (CLCN7) and beta (OSTM1) subunits. As to expression, liver, spleen, kidneys and brain.

It is found in the lysosome membrane. The catalysed reaction is 2 chloride(in) + H(+)(out) = 2 chloride(out) + H(+)(in). Slowly voltage-gated channel mediating the exchange of chloride ions against protons. Functions as antiporter and contributes to the acidification of the lysosome lumen and may be involved in maintaining lysosomal pH. The CLC channel family contains both chloride channels and proton-coupled anion transporters that exchange chloride or another anion for protons. The presence of conserved gating glutamate residues is typical for family members that function as antiporters. This chain is H(+)/Cl(-) exchange transporter 7, found in Mus musculus (Mouse).